Consider the following 107-residue polypeptide: MSEADSSSGFAGSVENGTFLELFPTSLSTSVDSSSGHLSNVYIYVSIFLSLLAFLLLLLIIALQRLKNIISSSSSYPEYPSDAGSSFTNLEVCSISSQRSTFSNLSS.

Residues 43–63 (IYVSIFLSLLAFLLLLLIIAL) form a helical membrane-spanning segment.

It is found in the membrane. This Mus musculus (Mouse) protein is Serine-rich and transmembrane domain-containing protein 1 (Sertm1).